We begin with the raw amino-acid sequence, 1056 residues long: Multidrug resistance protein MdtB (1056 aa).

12 consecutive transmembrane segments (helical) span residues 16–36, 342–362, 373–393, 396–416, 440–460, 472–492, 537–557, 869–889, 890–910, 911–931, 968–988, and 1002–1022; these read FILR…AGII, DVQF…YVFL, IAVP…GFSV, LTLM…IVVI, IGFT…PLLF, FAIT…TLTP, WITL…YLTI, LILA…ESFI, HPVT…LALM, VGGY…IGIV, ILMT…STGI, and GGLI…YLLF. The interval 1037–1056 is disordered; that stretch reads LQSQNQRELDHSPVNHQEPL. Residues 1043 to 1056 show a composition bias toward basic and acidic residues; sequence RELDHSPVNHQEPL.

Belongs to the resistance-nodulation-cell division (RND) (TC 2.A.6) family. MdtB subfamily. In terms of assembly, part of a tripartite efflux system composed of MdtA, MdtB and MdtC. MdtB forms a heteromultimer with MdtC.

The protein localises to the cell inner membrane. This is Multidrug resistance protein MdtB from Xenorhabdus bovienii (strain SS-2004) (Xenorhabdus nematophila subsp. bovienii).